Here is an 84-residue protein sequence, read N- to C-terminus: Cell division topological specificity factor (84 aa).

The protein belongs to the MinE family.

Functionally, prevents the cell division inhibition by proteins MinC and MinD at internal division sites while permitting inhibition at polar sites. This ensures cell division at the proper site by restricting the formation of a division septum at the midpoint of the long axis of the cell. The polypeptide is Cell division topological specificity factor (Granulibacter bethesdensis (strain ATCC BAA-1260 / CGDNIH1)).